Here is a 226-residue protein sequence, read N- to C-terminus: ATP-dependent Clp protease proteolytic subunit 4 (226 aa).

The Nucleophile role is filled by serine 122. Histidine 147 is a catalytic residue.

The protein belongs to the peptidase S14 family. In terms of assembly, fourteen ClpP subunits assemble into 2 heptameric rings which stack back to back to give a disk-like structure with a central cavity, resembling the structure of eukaryotic proteasomes.

Its subcellular location is the cytoplasm. The catalysed reaction is Hydrolysis of proteins to small peptides in the presence of ATP and magnesium. alpha-casein is the usual test substrate. In the absence of ATP, only oligopeptides shorter than five residues are hydrolyzed (such as succinyl-Leu-Tyr-|-NHMec, and Leu-Tyr-Leu-|-Tyr-Trp, in which cleavage of the -Tyr-|-Leu- and -Tyr-|-Trp bonds also occurs).. In terms of biological role, cleaves peptides in various proteins in a process that requires ATP hydrolysis. Has a chymotrypsin-like activity. Plays a major role in the degradation of misfolded proteins. The chain is ATP-dependent Clp protease proteolytic subunit 4 from Streptomyces avermitilis (strain ATCC 31267 / DSM 46492 / JCM 5070 / NBRC 14893 / NCIMB 12804 / NRRL 8165 / MA-4680).